Here is a 340-residue protein sequence, read N- to C-terminus: COP9 signalosome complex subunit 5 (340 aa).

The region spanning 52–189 (VRISATALIK…IGAFRTYPAD (138 aa)) is the MPN domain. Histidine 135, histidine 137, and aspartate 148 together coordinate Zn(2+). The JAMM motif motif lies at 135-148 (HSHPGYGCWLSGID).

The protein belongs to the peptidase M67A family. CSN5 subfamily. Component of the COP9 signalosome (CSN) complex.

The protein localises to the cytoplasm. It localises to the nucleus. Its function is as follows. Catalytic Component of the COP9 signalosome (CSN) complex that acts as an regulator of the ubiquitin (Ubl) conjugation pathway by mediating the deneddylation of the cullin subunit of SCF-type E3 ubiquitin-protein ligase complexes. The protein is COP9 signalosome complex subunit 5 (RRI1) of Gibberella zeae (strain ATCC MYA-4620 / CBS 123657 / FGSC 9075 / NRRL 31084 / PH-1) (Wheat head blight fungus).